The sequence spans 329 residues: Phenylalanine--tRNA ligase alpha subunit (329 aa).

Glu254 provides a ligand contact to Mg(2+).

It belongs to the class-II aminoacyl-tRNA synthetase family. Phe-tRNA synthetase alpha subunit type 1 subfamily. Tetramer of two alpha and two beta subunits. The cofactor is Mg(2+).

The protein resides in the cytoplasm. It catalyses the reaction tRNA(Phe) + L-phenylalanine + ATP = L-phenylalanyl-tRNA(Phe) + AMP + diphosphate + H(+). This chain is Phenylalanine--tRNA ligase alpha subunit (pheS), found in Haemophilus influenzae (strain ATCC 51907 / DSM 11121 / KW20 / Rd).